The primary structure comprises 144 residues: Large ribosomal subunit protein uL15 (144 aa).

Positions 1-49 are disordered; sequence MKLNTLSPAAGAKSAAKRVGRGIGSGLGKTAGRGHKGQKSRSGGGVRVG. Gly residues predominate over residues 21 to 31; sequence RGIGSGLGKTA.

It belongs to the universal ribosomal protein uL15 family. Part of the 50S ribosomal subunit.

In terms of biological role, binds to the 23S rRNA. The chain is Large ribosomal subunit protein uL15 from Shewanella loihica (strain ATCC BAA-1088 / PV-4).